The chain runs to 228 residues: Aspartate racemase (228 aa).

47 to 49 serves as a coordination point for substrate; that stretch reads DRT. Residue cysteine 82 is the Proton donor/acceptor of the active site. Residues 83 to 85 and lysine 164 each bind substrate; that span reads NTA. Cysteine 194 (proton donor/acceptor) is an active-site residue.

The protein belongs to the aspartate/glutamate racemases family. In terms of assembly, homodimer. The existence of the interchain disulfide bond seen in the crystal structures is uncertain, but disulfide bonds have been reported for cytoplasmic proteins from thermophiles.

The catalysed reaction is L-aspartate = D-aspartate. Weakly inhibited by citrate, but not by asparagine. In Pyrococcus horikoshii (strain ATCC 700860 / DSM 12428 / JCM 9974 / NBRC 100139 / OT-3), this protein is Aspartate racemase.